A 323-amino-acid polypeptide reads, in one-letter code: MSLNEQWQPSASIQNLLARAKIIADIRRFFTERGLLEVETPVLSEFGVTDVHLSTFSTAFTSPFMEKSKTLWLTTSPEYHMKRLLAAGSGAIFQLCKVFRNEESGKKHNPEFTMLEWYRPHFDMHRLINEVDDLLQQTLDCEPAEMASYQFVFQEHVGIDPLSAPINELIEKARECHLDGAENEDRDTLLQFLFSTLVEPNIGQNKPIAVYHFPATQAALAQISSEDHRVAERFEFYYKGIELANGFNELTDAQEQEHRFNQDNRLREQLGLPQHEIDHRFLGALQAGLPNTAGVALGVDRLIMLALGAENISEVISFNIDCA.

76-78 (SPE) contacts substrate. ATP-binding positions include 100 to 102 (RNE) and N109. Residue Y118 coordinates substrate. 242–243 (EL) contacts ATP. Residue E249 coordinates substrate. Position 298 (G298) interacts with ATP.

The protein belongs to the class-II aminoacyl-tRNA synthetase family. EpmA subfamily. As to quaternary structure, homodimer.

It catalyses the reaction D-beta-lysine + L-lysyl-[protein] + ATP = N(6)-((3R)-3,6-diaminohexanoyl)-L-lysyl-[protein] + AMP + diphosphate + H(+). In terms of biological role, with EpmB is involved in the beta-lysylation step of the post-translational modification of translation elongation factor P (EF-P). Catalyzes the ATP-dependent activation of (R)-beta-lysine produced by EpmB, forming a lysyl-adenylate, from which the beta-lysyl moiety is then transferred to the epsilon-amino group of a conserved specific lysine residue in EF-P. This chain is Elongation factor P--(R)-beta-lysine ligase, found in Histophilus somni (strain 129Pt) (Haemophilus somnus).